Reading from the N-terminus, the 123-residue chain is Small ribosomal subunit protein uS12cz/uS12cy (123 aa).

It belongs to the universal ribosomal protein uS12 family. Part of the 30S ribosomal subunit.

The protein resides in the plastid. It localises to the chloroplast. Its function is as follows. With S4 and S5 plays an important role in translational accuracy. Located at the interface of the 30S and 50S subunits. This Cucumis sativus (Cucumber) protein is Small ribosomal subunit protein uS12cz/uS12cy (rps12-A).